The chain runs to 108 residues: Succinate dehydrogenase assembly factor 4, mitochondrial (108 aa).

The transit peptide at 1-20 (MTPSRLPWLLSWVSATAWRA) directs the protein to the mitochondrion. The interval 31-108 (RKTSSSQGGK…WERKGRCIDF (78 aa)) is disordered. Basic and acidic residues-rich tracts occupy residues 52–87 (KLPE…EKGG) and 95–108 (RYGD…CIDF).

The protein belongs to the SDHAF4 family. As to quaternary structure, interacts with SDHA in its FAD-bound form.

It localises to the mitochondrion matrix. In terms of biological role, plays an essential role in the assembly of succinate dehydrogenase (SDH), an enzyme complex (also referred to as respiratory complex II) that is a component of both the tricarboxylic acid (TCA) cycle and the mitochondrial electron transport chain, and which couples the oxidation of succinate to fumarate with the reduction of ubiquinone (coenzyme Q) to ubiquinol. Binds to the flavoprotein subunit SDHA in its FAD-bound form, blocking the generation of excess reactive oxygen species (ROS) and facilitating its assembly with the iron-sulfur protein subunit SDHB into the SDH catalytic dimer. This Homo sapiens (Human) protein is Succinate dehydrogenase assembly factor 4, mitochondrial.